The primary structure comprises 93 residues: Small ribosomal subunit protein uS19c (93 aa).

This sequence belongs to the universal ribosomal protein uS19 family.

It localises to the plastid. It is found in the chloroplast. Its function is as follows. Protein S19 forms a complex with S13 that binds strongly to the 16S ribosomal RNA. In Brachypodium distachyon (Purple false brome), this protein is Small ribosomal subunit protein uS19c.